The sequence spans 189 residues: Glucose-6-phosphate isomerase (189 aa).

Fe cation-binding residues include His-88, His-90, Glu-97, and His-136.

This sequence belongs to the archaeal-type GPI family. In terms of assembly, homodimer.

It localises to the cytoplasm. The catalysed reaction is alpha-D-glucose 6-phosphate = beta-D-fructose 6-phosphate. The protein operates within carbohydrate degradation; glycolysis; D-glyceraldehyde 3-phosphate and glycerone phosphate from D-glucose: step 2/4. This chain is Glucose-6-phosphate isomerase, found in Thermococcus gammatolerans (strain DSM 15229 / JCM 11827 / EJ3).